A 220-amino-acid chain; its full sequence is Protein-L-isoaspartate O-methyltransferase (220 aa).

Ser-64 is an active-site residue.

This sequence belongs to the methyltransferase superfamily. L-isoaspartyl/D-aspartyl protein methyltransferase family.

The protein resides in the cytoplasm. It catalyses the reaction [protein]-L-isoaspartate + S-adenosyl-L-methionine = [protein]-L-isoaspartate alpha-methyl ester + S-adenosyl-L-homocysteine. Its function is as follows. Catalyzes the methyl esterification of L-isoaspartyl residues in peptides and proteins that result from spontaneous decomposition of normal L-aspartyl and L-asparaginyl residues. It plays a role in the repair and/or degradation of damaged proteins. This Methanoculleus marisnigri (strain ATCC 35101 / DSM 1498 / JR1) protein is Protein-L-isoaspartate O-methyltransferase.